Reading from the N-terminus, the 478-residue chain is Antiviral innate immune response effector IFIT1 (478 aa).

TPR repeat units lie at residues 52-85, 95-128, 139-174, 183-216, 218-249, and 251-284; these read VGIH…MQKE, LVTW…CKKP, PEID…DHEN, ISAY…NPDN, YLKV…NMSS, and TYVF…TPTS. W147 serves as a coordination point for mRNA. G190 contacts RNA. Residues K259, H289, Q290, and K336 each coordinate RNA. TPR repeat units follow at residues 305–339, 340–373, 378–412, and 437–470; these read ATKG…KPTF, EVAH…KPVV, QDIH…EQTS, and LESL…AADF.

This sequence belongs to the IFIT family. Component of an interferon-dependent multiprotein complex, at least composed of IFIT1, IFIT2 and IFIT3. Interacts (via TPR repeats 1-4) with RPL15. Interacts with STING1/MITA; could disrupt STING1 interaction with MAVS or TBK1, acting as a negative-feedback regulator of virus-triggered signaling. Interacts with EIF3E; this could be an alternative way to inhibit translation. In terms of processing, phosphorylated. ISGylated.

Its subcellular location is the cytoplasm. In terms of biological role, plays a key role in the innate immune response as part of an interferon-dependent multiprotein complex, recognizing and sequestering viral RNAs that lack host-specific 2'-O-methylation at their 5' cap. By distinguishing these RNAs from host mRNAs, inhibits their translation by competing with the translation initiation factor eIF4E. Could also prevent viral replication through its interaction with DNA replication origin-binding protein E1 of several viruses. Causes the translocation of E1 from the nucleus to the cytoplasm and can also inhibit its helicase activity in vitro. In Macaca fascicularis (Crab-eating macaque), this protein is Antiviral innate immune response effector IFIT1.